The sequence spans 852 residues: DNA mismatch repair protein MutS (852 aa).

ATP is bound at residue 602–609 (GPNMSGKS).

Belongs to the DNA mismatch repair MutS family.

Functionally, this protein is involved in the repair of mismatches in DNA. It is possible that it carries out the mismatch recognition step. This protein has a weak ATPase activity. This is DNA mismatch repair protein MutS from Streptococcus thermophilus (strain ATCC BAA-250 / LMG 18311).